The following is a 283-amino-acid chain: Pantothenate synthetase (283 aa).

30–37 (MGYLHEGH) serves as a coordination point for ATP. The active-site Proton donor is His37. (R)-pantoate is bound at residue Gln61. Gln61 contributes to the beta-alanine binding site. 147–150 (GQKD) is a binding site for ATP. Gln153 is a (R)-pantoate binding site. Residues Val176 and 184–187 (LSSR) each bind ATP.

The protein belongs to the pantothenate synthetase family. Homodimer.

Its subcellular location is the cytoplasm. The catalysed reaction is (R)-pantoate + beta-alanine + ATP = (R)-pantothenate + AMP + diphosphate + H(+). It functions in the pathway cofactor biosynthesis; (R)-pantothenate biosynthesis; (R)-pantothenate from (R)-pantoate and beta-alanine: step 1/1. Its function is as follows. Catalyzes the condensation of pantoate with beta-alanine in an ATP-dependent reaction via a pantoyl-adenylate intermediate. This is Pantothenate synthetase from Moorella thermoacetica (strain ATCC 39073 / JCM 9320).